Reading from the N-terminus, the 160-residue chain is Transcription elongation factor GreA (160 aa).

Positions 1–71 form a coiled coil; that stretch reads MAEKTYPMTL…GQISTLETKI (71 aa).

This sequence belongs to the GreA/GreB family.

Necessary for efficient RNA polymerase transcription elongation past template-encoded arresting sites. The arresting sites in DNA have the property of trapping a certain fraction of elongating RNA polymerases that pass through, resulting in locked ternary complexes. Cleavage of the nascent transcript by cleavage factors such as GreA or GreB allows the resumption of elongation from the new 3'terminus. GreA releases sequences of 2 to 3 nucleotides. The protein is Transcription elongation factor GreA of Streptococcus pyogenes serotype M3 (strain ATCC BAA-595 / MGAS315).